Consider the following 377-residue polypeptide: Fructose-bisphosphate aldolase 1, chloroplastic (377 aa).

Residues R74 and K164 each contribute to the substrate site. Residue E204 is the Proton acceptor of the active site. The Schiff-base intermediate with dihydroxyacetone-P role is filled by K246.

Belongs to the class I fructose-bisphosphate aldolase family.

It localises to the plastid. The protein localises to the chloroplast. It carries out the reaction beta-D-fructose 1,6-bisphosphate = D-glyceraldehyde 3-phosphate + dihydroxyacetone phosphate. Its pathway is carbohydrate degradation; glycolysis; D-glyceraldehyde 3-phosphate and glycerone phosphate from D-glucose: step 4/4. The sequence is that of Fructose-bisphosphate aldolase 1, chloroplastic (ALDCHL) from Chlamydomonas reinhardtii (Chlamydomonas smithii).